Reading from the N-terminus, the 248-residue chain is 3-deoxy-manno-octulosonate cytidylyltransferase (248 aa).

This sequence belongs to the KdsB family.

It is found in the cytoplasm. It carries out the reaction 3-deoxy-alpha-D-manno-oct-2-ulosonate + CTP = CMP-3-deoxy-beta-D-manno-octulosonate + diphosphate. It participates in nucleotide-sugar biosynthesis; CMP-3-deoxy-D-manno-octulosonate biosynthesis; CMP-3-deoxy-D-manno-octulosonate from 3-deoxy-D-manno-octulosonate and CTP: step 1/1. The protein operates within bacterial outer membrane biogenesis; lipopolysaccharide biosynthesis. Activates KDO (a required 8-carbon sugar) for incorporation into bacterial lipopolysaccharide in Gram-negative bacteria. This chain is 3-deoxy-manno-octulosonate cytidylyltransferase, found in Shigella flexneri.